The sequence spans 332 residues: tRNA U34 carboxymethyltransferase (332 aa).

Residues lysine 91, tryptophan 105, lysine 110, glycine 130, 152 to 154 (DPS), 181 to 182 (IE), methionine 196, tyrosine 200, and arginine 315 contribute to the carboxy-S-adenosyl-L-methionine site.

It belongs to the class I-like SAM-binding methyltransferase superfamily. CmoB family. As to quaternary structure, homotetramer.

It carries out the reaction carboxy-S-adenosyl-L-methionine + 5-hydroxyuridine(34) in tRNA = 5-carboxymethoxyuridine(34) in tRNA + S-adenosyl-L-homocysteine + H(+). Its function is as follows. Catalyzes carboxymethyl transfer from carboxy-S-adenosyl-L-methionine (Cx-SAM) to 5-hydroxyuridine (ho5U) to form 5-carboxymethoxyuridine (cmo5U) at position 34 in tRNAs. The sequence is that of tRNA U34 carboxymethyltransferase from Shewanella putrefaciens (strain CN-32 / ATCC BAA-453).